Here is a 160-residue protein sequence, read N- to C-terminus: Nucleotide-binding protein BAV0791 (160 aa).

This sequence belongs to the YajQ family.

Functionally, nucleotide-binding protein. This Bordetella avium (strain 197N) protein is Nucleotide-binding protein BAV0791.